The following is a 286-amino-acid chain: uncharacterized protein (286 aa).

The next 7 helical transmembrane spans lie at 30–50 (LTFMVAAFGIFFIFLVALTVQ), 68–88 (LSTIAVITSFVSLILYFVTAF), 99–119 (WFWALIITDVISYGITLGILL), 136–156 (IVYAFLGASLVFGSVWGLSAL), 169–189 (LFHILLWAFVISIVASLLSFI), 205–225 (IIPGLSLIVGGIFSLISVYFV), and 254–274 (SALFFGAWLISSFMNLVYFIL).

It is found in the cell membrane. This is an uncharacterized protein from Mycoplasma genitalium (strain ATCC 33530 / DSM 19775 / NCTC 10195 / G37) (Mycoplasmoides genitalium).